The primary structure comprises 544 residues: 4-coumarate--CoA ligase 1 (544 aa).

Ser-190, Ser-191, Gly-192, Thr-193, Thr-194, and Lys-198 together coordinate ATP. Tyr-240 is a binding site for (E)-4-coumaroyl-AMP. Lys-261 provides a ligand contact to CoA. Residues 263–332 (DIVPFLELIQ…AKFPNAKLGQ (70 aa)) are SBD1. The (E)-4-coumaroyl-AMP site is built by Ala-310, Gln-332, Gly-333, Thr-337, and Met-345. Residues Gln-332, Gly-333, and Thr-337 each contribute to the ATP site. Positions 333 to 400 (GYGMTEAGPV…IRGDQIMKGY (68 aa)) are SBD2. Residues Asp-421 and Arg-436 each contribute to the ATP site. (E)-4-coumaroyl-AMP contacts are provided by Lys-438 and Lys-442. 2 residues coordinate CoA: Lys-444 and Gly-445. Residue Lys-527 participates in ATP binding.

It belongs to the ATP-dependent AMP-binding enzyme family. Mg(2+) is required as a cofactor.

The catalysed reaction is (E)-4-coumarate + ATP + CoA = (E)-4-coumaroyl-CoA + AMP + diphosphate. It catalyses the reaction (E)-4-coumarate + ATP + H(+) = (E)-4-coumaroyl-AMP + diphosphate. The enzyme catalyses (E)-4-coumaroyl-AMP + CoA = (E)-4-coumaroyl-CoA + AMP + H(+). The protein operates within phytoalexin biosynthesis; 3,4',5-trihydroxystilbene biosynthesis; 3,4',5-trihydroxystilbene from trans-4-coumarate: step 1/2. Functionally, carboxylate--CoA ligase that may use 4-coumarate as substrate. Follows a two-step reaction mechanism, wherein the carboxylate substrate first undergoes adenylation by ATP, followed by a thioesterification in the presence of CoA to yield the final CoA thioester. The protein is 4-coumarate--CoA ligase 1 (4CL1) of Petroselinum crispum (Parsley).